Here is a 666-residue protein sequence, read N- to C-terminus: ATP-dependent RNA helicase MSS116, mitochondrial (666 aa).

Residues 1–22 (MLRHCSLGLVTTQISAIAPLRL) constitute a mitochondrion transit peptide. The span at 38-60 (RDRRSSRSREDKPYNSRTRRFDD) shows a compositional bias: basic and acidic residues. The segment at 38–131 (RDRRSSRSRE…KSYSKGGNTS (94 aa)) is disordered. Residues 120-131 (NTKSYSKGGNTS) show a composition bias toward polar residues. The short motif at 159–187 (SLLEKNVISRDLYDSISRMGFEQLTPVQQ) is the Q motif element. Residues 192–379 (PIITNSDSDI…NDIMNKEECL (188 aa)) form the Helicase ATP-binding domain. 205–212 (AKTGTGKT) serves as a coordination point for ATP. The DEAD box motif lies at 320-323 (DEAD). Positions 408 to 560 (NLYAAIEHIR…NIRKFEAQPH (153 aa)) constitute a Helicase C-terminal domain.

It belongs to the DEAD box helicase family. DDX18/HAS1 subfamily.

The protein resides in the mitochondrion matrix. The enzyme catalyses ATP + H2O = ADP + phosphate + H(+). Its function is as follows. ATP-dependent RNA helicase required for mitochondrial splicing of group I and II introns. Also required for efficient mitochondrial translation. The chain is ATP-dependent RNA helicase MSS116, mitochondrial (MSS116) from Candida glabrata (strain ATCC 2001 / BCRC 20586 / JCM 3761 / NBRC 0622 / NRRL Y-65 / CBS 138) (Yeast).